Consider the following 218-residue polypeptide: Redox-sensing transcriptional repressor Rex (218 aa).

The H-T-H motif DNA-binding region spans 18–57; sequence LYYRFIQSLHASGKQRVSSAELSEAVKVDSATIRRDFSYF. 92-97 contributes to the NAD(+) binding site; that stretch reads GVGHLG.

It belongs to the transcriptional regulatory Rex family. As to quaternary structure, homodimer.

It localises to the cytoplasm. Functionally, modulates transcription in response to changes in cellular NADH/NAD(+) redox state. The polypeptide is Redox-sensing transcriptional repressor Rex (Exiguobacterium sp. (strain ATCC BAA-1283 / AT1b)).